A 139-amino-acid chain; its full sequence is D-ribose pyranase (139 aa).

Catalysis depends on histidine 20, which acts as the Proton donor. Substrate contacts are provided by residues aspartate 28, histidine 106, and 128–130 (YAN).

The protein belongs to the RbsD / FucU family. RbsD subfamily. As to quaternary structure, homodecamer.

The protein localises to the cytoplasm. The enzyme catalyses beta-D-ribopyranose = beta-D-ribofuranose. It functions in the pathway carbohydrate metabolism; D-ribose degradation; D-ribose 5-phosphate from beta-D-ribopyranose: step 1/2. Its function is as follows. Catalyzes the interconversion of beta-pyran and beta-furan forms of D-ribose. The polypeptide is D-ribose pyranase (Maridesulfovibrio salexigens (strain ATCC 14822 / DSM 2638 / NCIMB 8403 / VKM B-1763) (Desulfovibrio salexigens)).